A 206-amino-acid polypeptide reads, in one-letter code: Ribonuclease M5 (206 aa).

The 84-residue stretch at 8–91 folds into the Toprim domain; sequence NEVIVVEGRD…AFLNRDEARP (84 aa). Mg(2+) contacts are provided by Glu14, Asp60, and Asp62.

This sequence belongs to the ribonuclease M5 family. Mg(2+) is required as a cofactor.

The protein localises to the cytoplasm. The enzyme catalyses Endonucleolytic cleavage of RNA, removing 21 and 42 nucleotides, respectively, from the 5'- and 3'-termini of a 5S-rRNA precursor.. In terms of biological role, required for correct processing of both the 5' and 3' ends of 5S rRNA precursor. Cleaves both sides of a double-stranded region yielding mature 5S rRNA in one step. This chain is Ribonuclease M5, found in Lactococcus lactis subsp. lactis (strain IL1403) (Streptococcus lactis).